The following is a 278-amino-acid chain: Pyrroline-5-carboxylate reductase (278 aa).

It belongs to the pyrroline-5-carboxylate reductase family.

The protein resides in the cytoplasm. It carries out the reaction L-proline + NADP(+) = (S)-1-pyrroline-5-carboxylate + NADPH + 2 H(+). It catalyses the reaction L-proline + NAD(+) = (S)-1-pyrroline-5-carboxylate + NADH + 2 H(+). It functions in the pathway amino-acid biosynthesis; L-proline biosynthesis; L-proline from L-glutamate 5-semialdehyde: step 1/1. In Actinidia chinensis var. chinensis (Chinese soft-hair kiwi), this protein is Pyrroline-5-carboxylate reductase.